The following is a 673-amino-acid chain: Protein kinase C delta type (673 aa).

Residues 1–106 (MAPFLRISFN…KNNGKAEFWL (106 aa)) form the C2 domain. Phosphothreonine occurs at positions 43 and 50. Phosphotyrosine is present on tyrosine 64. A Phosphoserine modification is found at serine 130. At threonine 141 the chain carries Phosphothreonine. The residue at position 155 (tyrosine 155) is a Phosphotyrosine. A Phorbol-ester/DAG-type 1 zinc finger spans residues 158-208 (NHEFIATFFGQPTFCSVCKEFVWGLNKQGYKCRQCNAAIHKKCIDKIIGRC). Threonine 218 is subject to Phosphothreonine. Residues 230-280 (PHRFKVYNYMSPTFCDHCGTLLWGLVKQGLKCEDCGMNVHHKCREKVANLC) form a Phorbol-ester/DAG-type 2 zinc finger. Position 299 is a phosphoserine; by autocatalysis (serine 299). A phosphotyrosine; by SRC mark is found at tyrosine 311 and tyrosine 332. A Protein kinase domain is found at 347-601 (FTFQKVLGKG…TGNIRLHPFF (255 aa)). 353–361 (LGKGSFGKV) provides a ligand contact to ATP. Tyrosine 372 carries the post-translational modification Phosphotyrosine. An ATP-binding site is contributed by lysine 376. Phosphothreonine is present on threonine 449. Aspartate 471 serves as the catalytic Proton acceptor. Serine 504 carries the phosphoserine modification. Threonine 505 is subject to Phosphothreonine; by autocatalysis. Residue tyrosine 565 is modified to Phosphotyrosine. In terms of domain architecture, AGC-kinase C-terminal spans 602–673 (KTINWNLLEK…VNPKYEQFLE (72 aa)). Phosphoserine occurs at positions 643, 652, and 662.

Belongs to the protein kinase superfamily. AGC Ser/Thr protein kinase family. PKC subfamily. Interacts with PDPK1 (via N-terminal region). Interacts with RAD9A. Interacts with CDCP1. Interacts with MUC1. Interacts with VASP. Interacts with CAVIN3. Interacts with PRKD2 (via N-terminus and zing-finger domain 1 and 2) in response to oxidative stress; the interaction is independent of PRKD2 tyrosine phosphorylation. Interacts with PLSC3; interaction is enhanced by UV irradiation. In terms of processing, autophosphorylated and/or phosphorylated at Thr-505, within the activation loop; phosphorylation at Thr-505 is not a prerequisite for enzymatic activity. Autophosphorylated at Ser-299. Upon TNFSF10/TRAIL treatment, phosphorylated at Tyr-155; phosphorylation is required for its translocation to the endoplasmic reticulum and cleavage by caspase-3. Phosphorylated at Tyr-311, Tyr-332 and Tyr-565; phosphorylation of Tyr-311 and Tyr-565 following thrombin or zymosan stimulation potentiates its kinase activity. Phosphorylated by protein kinase PDPK1; phosphorylation is inhibited by the apoptotic C-terminal cleavage product of PKN2. Phosphorylated at Tyr-311 and Tyr-332 by SRC; phosphorylation leads to enhanced autophosphorylation at Thr-505. Phosphorylated at Tyr-311 through a SYK and SRC mechanism downstream of C-type lectin receptors activation, promoting its activation. Proteolytically cleaved into a catalytic subunit and a regulatory subunit by caspase-3 during apoptosis which results in kinase activation.

It is found in the cytoplasm. It localises to the nucleus. The protein resides in the perinuclear region. Its subcellular location is the cell membrane. The protein localises to the mitochondrion. It is found in the endomembrane system. The enzyme catalyses L-seryl-[protein] + ATP = O-phospho-L-seryl-[protein] + ADP + H(+). It catalyses the reaction L-threonyl-[protein] + ATP = O-phospho-L-threonyl-[protein] + ADP + H(+). The catalysed reaction is L-tyrosyl-[protein] + ATP = O-phospho-L-tyrosyl-[protein] + ADP + H(+). Novel PKCs (PRKCD, PRKCE, PRKCH and PRKCQ) are calcium-insensitive, but activated by diacylglycerol (DAG) and phosphatidylserine. Three specific sites; Thr-505 (activation loop of the kinase domain), Ser-643 (turn motif) and Ser-662 (hydrophobic region), need to be phosphorylated for its full activation. Activated by caspase-3 (CASP3) cleavage during apoptosis. After cleavage, the pseudosubstrate motif in the regulatory subunit is released from the substrate recognition site of the catalytic subunit, which enables PRKCD to become constitutively activated. The catalytic subunit which displays properties of a sphingosine-dependent protein kinase is activated by D-erythro-sphingosine (Sph) or N,N-dimethyl-D-erythrosphingosine (DMS) or N,N,N-trimethyl-D-erythrosphingosine (TMS), but not by ceramide or Sph-1-P and is strongly inhibited by phosphatidylserine. Its function is as follows. Calcium-independent, phospholipid- and diacylglycerol (DAG)-dependent serine/threonine-protein kinase that plays contrasting roles in cell death and cell survival by functioning as a pro-apoptotic protein during DNA damage-induced apoptosis, but acting as an anti-apoptotic protein during cytokine receptor-initiated cell death, is involved in tumor suppression, is required for oxygen radical production by NADPH oxidase and acts as a positive or negative regulator in platelet functional responses. Upon DNA damage, activates the promoter of the death-promoting transcription factor BCLAF1/Btf to trigger BCLAF1-mediated p53/TP53 gene transcription and apoptosis. In response to oxidative stress, interact with and activate CHUK/IKKA in the nucleus, causing the phosphorylation of p53/TP53. In the case of ER stress or DNA damage-induced apoptosis, can form a complex with the tyrosine-protein kinase ABL1 which trigger apoptosis independently of p53/TP53. In cytosol can trigger apoptosis by activating MAPK11 or MAPK14, inhibiting AKT1 and decreasing the level of X-linked inhibitor of apoptosis protein (XIAP), whereas in nucleus induces apoptosis via the activation of MAPK8 or MAPK9. Upon ionizing radiation treatment, is required for the activation of the apoptosis regulators BAX and BAK, which trigger the mitochondrial cell death pathway. Can phosphorylate MCL1 and target it for degradation which is sufficient to trigger for BAX activation and apoptosis. Is required for the control of cell cycle progression both at G1/S and G2/M phases. Mediates phorbol 12-myristate 13-acetate (PMA)-induced inhibition of cell cycle progression at G1/S phase by up-regulating the CDK inhibitor CDKN1A/p21 and inhibiting the cyclin CCNA2 promoter activity. In response to UV irradiation can phosphorylate CDK1, which is important for the G2/M DNA damage checkpoint activation. Can protect glioma cells from the apoptosis induced by TNFSF10/TRAIL, probably by inducing increased phosphorylation and subsequent activation of AKT1. Can also act as tumor suppressor upon mitogenic stimulation with PMA or TPA. In N-formyl-methionyl-leucyl-phenylalanine (fMLP)-treated cells, is required for NCF1 (p47-phox) phosphorylation and activation of NADPH oxidase activity, and regulates TNF-elicited superoxide anion production in neutrophils, by direct phosphorylation and activation of NCF1 or indirectly through MAPK1/3 (ERK1/2) signaling pathways. Involved in antifungal immunity by mediating phosphorylation and activation of CARD9 downstream of C-type lectin receptors activation, promoting interaction between CARD9 and BCL10, followed by activation of NF-kappa-B and MAP kinase p38 pathways. May also play a role in the regulation of NADPH oxidase activity in eosinophil after stimulation with IL5, leukotriene B4 or PMA. In collagen-induced platelet aggregation, acts a negative regulator of filopodia formation and actin polymerization by interacting with and negatively regulating VASP phosphorylation. Downstream of PAR1, PAR4 and CD36/GP4 receptors, regulates differentially platelet dense granule secretion; acts as a positive regulator in PAR-mediated granule secretion, whereas it negatively regulates CD36/GP4-mediated granule release. Phosphorylates MUC1 in the C-terminal and regulates the interaction between MUC1 and beta-catenin. The catalytic subunit phosphorylates 14-3-3 proteins (YWHAB, YWHAZ and YWHAH) in a sphingosine-dependent fashion. Phosphorylates ELAVL1 in response to angiotensin-2 treatment. Phosphorylates mitochondrial phospholipid scramblase 3 (PLSCR3), resulting in increased cardiolipin expression on the mitochondrial outer membrane which facilitates apoptosis. Phosphorylates SMPD1 which induces SMPD1 secretion. Truncated isoform 2 is inactive. This is Protein kinase C delta type from Rattus norvegicus (Rat).